Consider the following 312-residue polypeptide: Ribonuclease Z (312 aa).

Positions 62, 64, 66, 67, 144, 215, and 273 each coordinate Zn(2+). Asp-66 functions as the Proton acceptor in the catalytic mechanism.

The protein belongs to the RNase Z family. In terms of assembly, homodimer. Requires Zn(2+) as cofactor.

The enzyme catalyses Endonucleolytic cleavage of RNA, removing extra 3' nucleotides from tRNA precursor, generating 3' termini of tRNAs. A 3'-hydroxy group is left at the tRNA terminus and a 5'-phosphoryl group is left at the trailer molecule.. Its function is as follows. Zinc phosphodiesterase, which displays some tRNA 3'-processing endonuclease activity. Probably involved in tRNA maturation, by removing a 3'-trailer from precursor tRNA. This is Ribonuclease Z from Prochlorococcus marinus (strain MIT 9301).